The sequence spans 194 residues: Adenylate kinase (194 aa).

Position 12-17 (glycine 12–threonine 17) interacts with ATP. The tract at residues serine 34–valine 63 is NMP. Residues threonine 35, arginine 40, glutamine 61–valine 63, glycine 88–arginine 91, and glutamine 95 contribute to the AMP site. The tract at residues glycine 130–aspartate 136 is LID. Residue arginine 131 coordinates ATP. AMP is bound by residues arginine 133 and arginine 145. Arginine 173 serves as a coordination point for ATP.

It belongs to the adenylate kinase family. In terms of assembly, monomer.

The protein resides in the cytoplasm. It carries out the reaction AMP + ATP = 2 ADP. The protein operates within purine metabolism; AMP biosynthesis via salvage pathway; AMP from ADP: step 1/1. In terms of biological role, catalyzes the reversible transfer of the terminal phosphate group between ATP and AMP. Plays an important role in cellular energy homeostasis and in adenine nucleotide metabolism. In Nitratiruptor sp. (strain SB155-2), this protein is Adenylate kinase.